The primary structure comprises 278 residues: 4-deoxy-L-threo-5-hexosulose-uronate ketol-isomerase (278 aa).

Zn(2+) is bound by residues H196, H198, E203, and H245.

This sequence belongs to the KduI family. The cofactor is Zn(2+).

The enzyme catalyses 5-dehydro-4-deoxy-D-glucuronate = 3-deoxy-D-glycero-2,5-hexodiulosonate. It functions in the pathway glycan metabolism; pectin degradation; 2-dehydro-3-deoxy-D-gluconate from pectin: step 4/5. Functionally, catalyzes the isomerization of 5-dehydro-4-deoxy-D-glucuronate to 3-deoxy-D-glycero-2,5-hexodiulosonate. This Enterobacter sp. (strain 638) protein is 4-deoxy-L-threo-5-hexosulose-uronate ketol-isomerase.